Reading from the N-terminus, the 320-residue chain is Acetyl-coenzyme A carboxylase carboxyl transferase subunit alpha (320 aa).

The region spanning 33-294 (AFDTEIQALR…GDAVEDELKA (262 aa)) is the CoA carboxyltransferase C-terminal domain.

The protein belongs to the AccA family. Acetyl-CoA carboxylase is a heterohexamer composed of biotin carboxyl carrier protein (AccB), biotin carboxylase (AccC) and two subunits each of ACCase subunit alpha (AccA) and ACCase subunit beta (AccD).

It localises to the cytoplasm. The catalysed reaction is N(6)-carboxybiotinyl-L-lysyl-[protein] + acetyl-CoA = N(6)-biotinyl-L-lysyl-[protein] + malonyl-CoA. It functions in the pathway lipid metabolism; malonyl-CoA biosynthesis; malonyl-CoA from acetyl-CoA: step 1/1. Functionally, component of the acetyl coenzyme A carboxylase (ACC) complex. First, biotin carboxylase catalyzes the carboxylation of biotin on its carrier protein (BCCP) and then the CO(2) group is transferred by the carboxyltransferase to acetyl-CoA to form malonyl-CoA. The polypeptide is Acetyl-coenzyme A carboxylase carboxyl transferase subunit alpha (Caulobacter vibrioides (strain ATCC 19089 / CIP 103742 / CB 15) (Caulobacter crescentus)).